We begin with the raw amino-acid sequence, 419 residues long: Glucose-1-phosphate adenylyltransferase (419 aa).

Alpha-D-glucose 1-phosphate contacts are provided by residues Y106, G171, 186-187, and S204; that span reads EK.

It belongs to the bacterial/plant glucose-1-phosphate adenylyltransferase family. Homotetramer.

The enzyme catalyses alpha-D-glucose 1-phosphate + ATP + H(+) = ADP-alpha-D-glucose + diphosphate. The protein operates within glycan biosynthesis; glycogen biosynthesis. Its function is as follows. Involved in the biosynthesis of ADP-glucose, a building block required for the elongation reactions to produce glycogen. Catalyzes the reaction between ATP and alpha-D-glucose 1-phosphate (G1P) to produce pyrophosphate and ADP-Glc. The chain is Glucose-1-phosphate adenylyltransferase from Roseobacter denitrificans (strain ATCC 33942 / OCh 114) (Erythrobacter sp. (strain OCh 114)).